The primary structure comprises 240 residues: Caffeoyl-CoA O-methyltransferase 5 (240 aa).

Lysine 14 is a substrate binding site. Residues threonine 56, glutamate 78, 80-81, serine 86, aspartate 104, and alanine 133 contribute to the S-adenosyl-L-methionine site; that span reads GV. Aspartate 156 is a substrate binding site. Residue aspartate 156 coordinates a divalent metal cation. S-adenosyl-L-methionine is bound at residue aspartate 158. Positions 182 and 183 each coordinate a divalent metal cation. Residue asparagine 187 coordinates substrate.

It belongs to the class I-like SAM-binding methyltransferase superfamily. Cation-dependent O-methyltransferase family. CCoAMT subfamily. Mg(2+) serves as cofactor. Expression steadily increases from the bottom to the top of the plant.

The catalysed reaction is (E)-caffeoyl-CoA + S-adenosyl-L-methionine = (E)-feruloyl-CoA + S-adenosyl-L-homocysteine + H(+). It functions in the pathway aromatic compound metabolism; phenylpropanoid biosynthesis. In terms of biological role, methylates caffeoyl-CoA to feruloyl-CoA and 5-hydroxyferuloyl-CoA to sinapoyl-CoA. Plays a role in the synthesis of feruloylated polysaccharides. Involved in the reinforcement of the plant cell wall. Also involved in the responding to wounding or pathogen challenge by the increased formation of cell wall-bound ferulic acid polymers. Methylates 5-hydroxyferulolyl-CoA more efficiently than caffeoyl-CoA. The sequence is that of Caffeoyl-CoA O-methyltransferase 5 (CCOAOMT5) from Nicotiana tabacum (Common tobacco).